A 404-amino-acid polypeptide reads, in one-letter code: Argininosuccinate synthase (404 aa).

9–17 (AYSGGLDTS) provides a ligand contact to ATP. L-citrulline is bound at residue tyrosine 86. Glycine 116 provides a ligand contact to ATP. Residues threonine 118, asparagine 122, and aspartate 123 each coordinate L-aspartate. Residue asparagine 122 coordinates L-citrulline. Arginine 126, serine 174, serine 183, glutamate 259, and tyrosine 271 together coordinate L-citrulline.

It belongs to the argininosuccinate synthase family. Type 1 subfamily. As to quaternary structure, homotetramer.

It is found in the cytoplasm. It carries out the reaction L-citrulline + L-aspartate + ATP = 2-(N(omega)-L-arginino)succinate + AMP + diphosphate + H(+). The protein operates within amino-acid biosynthesis; L-arginine biosynthesis; L-arginine from L-ornithine and carbamoyl phosphate: step 2/3. The sequence is that of Argininosuccinate synthase from Listeria welshimeri serovar 6b (strain ATCC 35897 / DSM 20650 / CCUG 15529 / CIP 8149 / NCTC 11857 / SLCC 5334 / V8).